The chain runs to 450 residues: Folate synthesis bifunctional protein (450 aa).

Residues 1–166 (MTSWNFVCLS…TFAELAAIYP (166 aa)) form an HPPK region. Residues 180 to 441 (TQIMGIVNIT…QVEGNRRALA (262 aa)) form the Pterin-binding domain. Residues 182–450 (IMGIVNITDN…AAAAWAGMFV (269 aa)) form a DHPS region. Asn-187 provides a ligand contact to Mg(2+). Residues Thr-227, Asp-267, Asn-287, Asp-358, Lys-395, and 429–431 (RVH) contribute to the (7,8-dihydropterin-6-yl)methyl diphosphate site.

This sequence in the C-terminal section; belongs to the DHPS family. In the N-terminal section; belongs to the HPPK family. Mg(2+) is required as a cofactor.

It carries out the reaction 6-hydroxymethyl-7,8-dihydropterin + ATP = (7,8-dihydropterin-6-yl)methyl diphosphate + AMP + H(+). It catalyses the reaction (7,8-dihydropterin-6-yl)methyl diphosphate + 4-aminobenzoate = 7,8-dihydropteroate + diphosphate. It functions in the pathway cofactor biosynthesis; tetrahydrofolate biosynthesis; 2-amino-4-hydroxy-6-hydroxymethyl-7,8-dihydropteridine diphosphate from 7,8-dihydroneopterin triphosphate: step 4/4. It participates in cofactor biosynthesis; tetrahydrofolate biosynthesis; 7,8-dihydrofolate from 2-amino-4-hydroxy-6-hydroxymethyl-7,8-dihydropteridine diphosphate and 4-aminobenzoate: step 1/2. The sequence is that of Folate synthesis bifunctional protein (folKP) from Chlamydia trachomatis serovar D (strain ATCC VR-885 / DSM 19411 / UW-3/Cx).